Consider the following 209-residue polypeptide: Urease accessory protein UreG (209 aa).

10–17 (GPVGSGKT) contributes to the GTP binding site.

This sequence belongs to the SIMIBI class G3E GTPase family. UreG subfamily. In terms of assembly, homodimer. UreD, UreF and UreG form a complex that acts as a GTP-hydrolysis-dependent molecular chaperone, activating the urease apoprotein by helping to assemble the nickel containing metallocenter of UreC. The UreE protein probably delivers the nickel.

The protein resides in the cytoplasm. Functionally, facilitates the functional incorporation of the urease nickel metallocenter. This process requires GTP hydrolysis, probably effectuated by UreG. This is Urease accessory protein UreG from Lysinibacillus sphaericus (strain C3-41).